Here is a 596-residue protein sequence, read N- to C-terminus: Chaperone protein DnaK (596 aa).

A Phosphothreonine; by autocatalysis modification is found at Thr-180.

This sequence belongs to the heat shock protein 70 family.

Its function is as follows. Acts as a chaperone. In Thermosipho melanesiensis (strain DSM 12029 / CIP 104789 / BI429), this protein is Chaperone protein DnaK.